The following is a 212-amino-acid chain: ER lumen protein-retaining receptor 1 (212 aa).

The Lumenal segment spans residues 1 to 4 (MNLF). The chain crosses the membrane as a helical span at residues 5-24 (RFLGDLSHLLAIILLLLKIW). Over 25–32 (KSRSCAGI) the chain is Cytoplasmic. The helical transmembrane segment at 33-52 (SGKSQVLFAVVFTARYLDLF) threads the bilayer. Positions 47–48 (RY) are interaction with the K-D-E-L motif on target proteins. Topologically, residues 53-58 (TNYISL) are lumenal. Residues 59-79 (YNTCMKVVYIACSFTTVWMIY) traverse the membrane as a helical segment. At 80-92 (SKFKATYDGNHDT) the chain is on the cytoplasmic side. A helical membrane pass occupies residues 93–110 (FRVEFLVVPTAVLAFLVN). At 111–116 (HDFTPL) the chain is on the lumenal side. A helical membrane pass occupies residues 117–135 (EILWTFSIYLESVAILPQL). The Cytoplasmic portion of the chain corresponds to 136–149 (FMVSKTGEAETITS). The helical transmembrane segment at 150–168 (HYLFALGVYRTLYLFNWIW) threads the bilayer. Residues 159-169 (RTLYLFNWIWR) form an interaction with the K-D-E-L motif on target proteins region. Topologically, residues 169–178 (RYHFEGFFDL) are lumenal. Residues 179–199 (IAIVAGLVQTVLYCDFFYLYI) traverse the membrane as a helical segment. The Cytoplasmic segment spans residues 200–212 (TKVLKGKKLSLPA). An important for recycling of cargo proteins with the sequence motif K-D-E-L from the Golgi to the endoplasmic reticulum region spans residues 204–207 (KGKK). At S209 the chain carries Phosphoserine; by PKA.

Belongs to the ERD2 family. Upon ligand binding the receptor oligomerizes and interacts with components of the transport machinery such as ARFGAP1 and ARF1. Phosphorylation by PKA at Ser-209 is required for endoplasmic reticulum retention function.

The protein localises to the golgi apparatus membrane. Its subcellular location is the cytoplasmic vesicle. It is found in the COPI-coated vesicle membrane. The protein resides in the endoplasmic reticulum membrane. It localises to the endoplasmic reticulum-Golgi intermediate compartment membrane. Receptor for the C-terminal sequence motif K-D-E-L that is present on endoplasmic reticulum resident proteins and that mediates their recycling from the Golgi back to the endoplasmic reticulum. The sequence is that of ER lumen protein-retaining receptor 1 (Kdelr1) from Rattus norvegicus (Rat).